The primary structure comprises 222 residues: Protein ORM1 (222 aa).

Residues Met1 to His57 are disordered. Residues Met1–Ala85 are Cytoplasmic-facing. Over residues Ala12–Asp23 the composition is skewed to polar residues. Residues Ser29, Ser32, and Ser56 each carry the phosphoserine modification. The chain crosses the membrane as a helical span at residues Trp86–Val106. Residues Thr107–Glu109 are Extracellular-facing. The chain crosses the membrane as a helical span at residues Trp110–Ile130. Residues Lys131 to Lys162 lie on the Cytoplasmic side of the membrane. Residues Phe163–Leu183 traverse the membrane as a helical segment. Lys184 is a topological domain (extracellular). A helical transmembrane segment spans residues Leu185–Thr205. Residues His206–Ser222 are Cytoplasmic-facing.

Belongs to the ORM family. As to quaternary structure, component of the SPOTS complex, at least composed of LCB1/2 (LCB1 and/or LCB2), ORM1/2 (ORM1 and/or ORM2), SAC1 and TSC3. Post-translationally, phosphorylated in case of disruption of sphingolipid synthesis. Phosphorylation regulates inhibitory activity of serine palmitoyltransferases (LCB1 and LCB2).

It is found in the endoplasmic reticulum membrane. Component of the SPOTS complex that acts as a negative regulator of sphingolipid synthesis. Acts by inhibiting serine palmitoyltransferases (LCB1 and LCB2) activity. Along with ORM2, plays a role in the phosphorylation of LAC1 and YPK1, the distribution of actin patches between mother and daughter cells, and in endocytosis. Disruption or inhibition of sphingolipid synthesis leads to the activation and phosphorylation of YPK1 through the TORC2 and PKH1 pathways, which in turn phosphorylates ORM1 and LAG1 to activate sphingolipid synthesis. This chain is Protein ORM1 (ORM1), found in Saccharomyces cerevisiae (strain ATCC 204508 / S288c) (Baker's yeast).